The following is a 159-amino-acid chain: Na(+)/H(+) antiporter subunit E1 (159 aa).

The next 4 helical transmembrane spans lie at 1–21, 27–47, 49–69, and 101–121; these read MAIQ…LSGS, LLLG…ILPG, FYFI…VELL, and WQIV…VLGI.

Belongs to the CPA3 antiporters (TC 2.A.63) subunit E family. In terms of assembly, may form a heterooligomeric complex that consists of seven subunits: mnhA1, mnhB1, mnhC1, mnhD1, mnhE1, mnhF1 and mnhG1.

The protein localises to the cell membrane. Mnh complex is a Na(+)/H(+) antiporter involved in Na(+) excretion. This Staphylococcus haemolyticus (strain JCSC1435) protein is Na(+)/H(+) antiporter subunit E1 (mnhE1).